Here is a 366-residue protein sequence, read N- to C-terminus: Alanine racemase (366 aa).

The Proton acceptor; specific for D-alanine role is filled by K40. Residue K40 is modified to N6-(pyridoxal phosphate)lysine. R136 serves as a coordination point for substrate. Catalysis depends on Y263, which acts as the Proton acceptor; specific for L-alanine. M310 serves as a coordination point for substrate.

The protein belongs to the alanine racemase family. Requires pyridoxal 5'-phosphate as cofactor.

It catalyses the reaction L-alanine = D-alanine. It participates in amino-acid biosynthesis; D-alanine biosynthesis; D-alanine from L-alanine: step 1/1. In terms of biological role, catalyzes the interconversion of L-alanine and D-alanine. May also act on other amino acids. In Streptococcus pyogenes serotype M12 (strain MGAS2096), this protein is Alanine racemase (alr).